The primary structure comprises 94 residues: DNA gyrase subunit A (94 aa).

In terms of domain architecture, Topo IIA-type catalytic spans 35-94 (LPDVRDGLKPVHRRILYGLNEQGMTPDKPYKKSARIVGDVMGKYHPHGDSSIYEAMVRMA).

It belongs to the type II topoisomerase GyrA/ParC subunit family. In terms of assembly, heterotetramer, composed of two GyrA and two GyrB chains. In the heterotetramer, GyrA contains the active site tyrosine that forms a transient covalent intermediate with DNA, while GyrB binds cofactors and catalyzes ATP hydrolysis.

The protein resides in the cytoplasm. It catalyses the reaction ATP-dependent breakage, passage and rejoining of double-stranded DNA.. Its function is as follows. A type II topoisomerase that negatively supercoils closed circular double-stranded (ds) DNA in an ATP-dependent manner to modulate DNA topology and maintain chromosomes in an underwound state. Negative supercoiling favors strand separation, and DNA replication, transcription, recombination and repair, all of which involve strand separation. Also able to catalyze the interconversion of other topological isomers of dsDNA rings, including catenanes and knotted rings. Type II topoisomerases break and join 2 DNA strands simultaneously in an ATP-dependent manner. The chain is DNA gyrase subunit A from Staphylococcus epidermidis.